Consider the following 685-residue polypeptide: Multisite-specific tRNA:(cytosine-C(5))-methyltransferase trm4b (685 aa).

Residues 167–173 (CAAPGSK), Asp-208, Asp-235, and Asp-270 each bind S-adenosyl-L-methionine. Catalysis depends on Cys-323, which acts as the Nucleophile.

Belongs to the class I-like SAM-binding methyltransferase superfamily. RsmB/NOP family. TRM4 subfamily.

Its subcellular location is the nucleus. It catalyses the reaction cytidine(49) in tRNA precursor + S-adenosyl-L-methionine = 5-methylcytidine(49) in tRNA precursor + S-adenosyl-L-homocysteine + H(+). The enzyme catalyses cytidine(50) in tRNA + S-adenosyl-L-methionine = 5-methylcytidine(50) in tRNA + S-adenosyl-L-homocysteine + H(+). The catalysed reaction is cytidine(60) in tRNA(Asp) + S-adenosyl-L-methionine = 5-methylcytidine(60) in tRNA(Asp) + S-adenosyl-L-homocysteine + H(+). It carries out the reaction cytidine(61) in tRNA(Asp) + S-adenosyl-L-methionine = 5-methylcytidine(61) in tRNA(Asp) + S-adenosyl-L-homocysteine + H(+). It catalyses the reaction cytidine(62) in tRNA(Asp) + S-adenosyl-L-methionine = 5-methylcytidine(62) in tRNA(Asp) + S-adenosyl-L-homocysteine + H(+). TRNA cytosine C(5)-methyltransferase that methylates cytosine to 5-methylcytosine (m5C) in tRNAs at position 49 and 50. Trm4a and trm4b methylate different sets of tRNAs. Also methylates cytosine to m5C at positions (60, 61 and 62) in tRNA(Asp). In Schizosaccharomyces pombe (strain 972 / ATCC 24843) (Fission yeast), this protein is Multisite-specific tRNA:(cytosine-C(5))-methyltransferase trm4b.